Consider the following 349-residue polypeptide: Galactose-1-phosphate uridylyltransferase (349 aa).

29 to 32 is a binding site for UDP-alpha-D-glucose; the sequence is RAKR. Zn(2+) contacts are provided by Cys53 and Cys56. UDP-alpha-D-glucose is bound at residue 78–79; it reads ND. Residue His116 participates in Zn(2+) binding. Residues Asn154 and 160-162 each bind UDP-alpha-D-glucose; that span reads GCS. His165 provides a ligand contact to Zn(2+). His167 functions as the Tele-UMP-histidine intermediate in the catalytic mechanism. Gln169 is a binding site for UDP-alpha-D-glucose. Fe cation contacts are provided by Glu183, His282, His297, and His299. UDP-alpha-D-glucose-binding positions include 312–313, 317–318, and Gln324; these read KF and YE.

Belongs to the galactose-1-phosphate uridylyltransferase type 1 family. It depends on Zn(2+) as a cofactor.

It catalyses the reaction alpha-D-galactose 1-phosphate + UDP-alpha-D-glucose = alpha-D-glucose 1-phosphate + UDP-alpha-D-galactose. It functions in the pathway carbohydrate metabolism; galactose metabolism. The sequence is that of Galactose-1-phosphate uridylyltransferase (galT) from Haemophilus influenzae (strain ATCC 51907 / DSM 11121 / KW20 / Rd).